We begin with the raw amino-acid sequence, 558 residues long: Cytochrome c oxidase subunit 1-beta (558 aa).

Residues 1 to 28 (MADAAVHGHGDHHDTRGFFTRWFMSTNH) are Cytoplasmic-facing. Residues 29–59 (KDIGILYLFTAGIVGLISVCFTVYMRMELQH) traverse the membrane as a helical segment. The Periplasmic segment spans residues 60-82 (PGVQYMCLEGARLIADASAECTP). Cys66 and Cys80 form a disulfide bridge. Residues 83–120 (NGHLWNVMITYHGVLMMFFVVIPALFGGFGNYFMPLHI) form a helical membrane-spanning segment. His94 serves as a coordination point for Fe(II)-heme a. Topologically, residues 121-126 (GAPDMA) are cytoplasmic. Residues 127-151 (FPRLNNLSYWMYVCGVALGVASLLA) traverse the membrane as a helical segment. Residues 152 to 176 (PGGNDQMGSGVGWVLYPPLSTTEAG) are Periplasmic-facing. A helical transmembrane segment spans residues 177-206 (YSMDLAIFAVHVSGASSILGAINIITTFLN). Residues 207–217 (MRAPGMTLFKV) are Cytoplasmic-facing. A helical transmembrane segment spans residues 218–251 (PLFAWSVFITAWLILLSLPVLAGAITMLLMDRNF). Residues 252–262 (GTQFFDPAGGG) lie on the Periplasmic side of the membrane. The chain crosses the membrane as a helical span at residues 263–299 (DPVLYQHILWFFGHPEVYIIILPGFGIISHVISTFAK). Residues His276 and Tyr280 each coordinate Cu cation. A cross-link (1'-histidyl-3'-tyrosine (His-Tyr)) is located at residues 276 to 280 (HPEVY). The Cytoplasmic segment spans residues 300–303 (KPIF). The helical transmembrane segment at 304–331 (GYLPMVLAMAAIGILGFVVWAHHMYTAG) threads the bilayer. 2 residues coordinate Cu cation: His325 and His326. A topological domain (periplasmic) is located at residue Met332. The helical transmembrane segment at 333–364 (SLTQQAYFMLATMTIAVPTGIKVFSWIATMWG) threads the bilayer. The Cytoplasmic portion of the chain corresponds to 365–369 (GSIEF). Residues 370–395 (KTPMLWAFGFLFLFTVGGVTGVVLSQ) form a helical membrane-spanning segment. Residues 396-404 (APLDRVYHD) are Periplasmic-facing. The helical transmembrane segment at 405 to 437 (TYYVVAHFHYVMSLGAVFGIFAGVYYWIGKMSG) threads the bilayer. Residue His411 participates in heme a3 binding. His413 contributes to the Fe(II)-heme a binding site. Residues 438-440 (RQY) lie on the Cytoplasmic side of the membrane. The helical transmembrane segment at 441 to 469 (PEWAGQLHFWMMFIGSNLIFFPQHFLGRQ) threads the bilayer. Topologically, residues 470-478 (GMPRRYIDY) are periplasmic. A helical membrane pass occupies residues 479–514 (PVEFAYWNNISSIGAYISFASFLFFIGIVFYTLFAG). Topologically, residues 515–558 (KRVNVPNYWNEHADTLEWTLPSPPPEHTFETLPKREDWDRAHAH) are cytoplasmic.

It belongs to the heme-copper respiratory oxidase family. Cu(2+) is required as a cofactor. Requires heme as cofactor. In terms of processing, his-276 and Tyr-280 are involved in the formation of a copper-coordinated covalent cross-link at the active site of the catalytic subunit I.

The protein resides in the cell inner membrane. The enzyme catalyses 4 Fe(II)-[cytochrome c] + O2 + 8 H(+)(in) = 4 Fe(III)-[cytochrome c] + 2 H2O + 4 H(+)(out). The protein operates within energy metabolism; oxidative phosphorylation. Its function is as follows. Subunit I and II form the functional core of the enzyme complex. Electrons originating in cytochrome c are transferred via heme a and Cu(A) to the binuclear center formed by heme a3 and Cu(B). This cytochrome c oxidase shows proton pump activity across the membrane in addition to the electron transfer. This Paracoccus denitrificans protein is Cytochrome c oxidase subunit 1-beta (ctaDII).